The chain runs to 223 residues: Large ribosomal subunit protein uL4 (223 aa).

Residues 49–106 (AAARQGTHSTKTRGEVSGGGRKPYRQKGTGRARQGSTRAPQFTGGGVVHGPKPRDYSQ) are disordered.

It belongs to the universal ribosomal protein uL4 family. Part of the 50S ribosomal subunit.

In terms of biological role, one of the primary rRNA binding proteins, this protein initially binds near the 5'-end of the 23S rRNA. It is important during the early stages of 50S assembly. It makes multiple contacts with different domains of the 23S rRNA in the assembled 50S subunit and ribosome. Its function is as follows. Forms part of the polypeptide exit tunnel. This chain is Large ribosomal subunit protein uL4, found in Mycobacterium bovis (strain ATCC BAA-935 / AF2122/97).